Here is a 379-residue protein sequence, read N- to C-terminus: UDP-N-acetylglucosamine--N-acetylmuramyl-(pentapeptide) pyrophosphoryl-undecaprenol N-acetylglucosamine transferase (379 aa).

Residues 19–21 (TGG), N133, R174, S207, I261, and Q306 each bind UDP-N-acetyl-alpha-D-glucosamine.

The protein belongs to the glycosyltransferase 28 family. MurG subfamily.

The protein localises to the cell inner membrane. It carries out the reaction di-trans,octa-cis-undecaprenyl diphospho-N-acetyl-alpha-D-muramoyl-L-alanyl-D-glutamyl-meso-2,6-diaminopimeloyl-D-alanyl-D-alanine + UDP-N-acetyl-alpha-D-glucosamine = di-trans,octa-cis-undecaprenyl diphospho-[N-acetyl-alpha-D-glucosaminyl-(1-&gt;4)]-N-acetyl-alpha-D-muramoyl-L-alanyl-D-glutamyl-meso-2,6-diaminopimeloyl-D-alanyl-D-alanine + UDP + H(+). The protein operates within cell wall biogenesis; peptidoglycan biosynthesis. Its function is as follows. Cell wall formation. Catalyzes the transfer of a GlcNAc subunit on undecaprenyl-pyrophosphoryl-MurNAc-pentapeptide (lipid intermediate I) to form undecaprenyl-pyrophosphoryl-MurNAc-(pentapeptide)GlcNAc (lipid intermediate II). The protein is UDP-N-acetylglucosamine--N-acetylmuramyl-(pentapeptide) pyrophosphoryl-undecaprenol N-acetylglucosamine transferase of Porphyromonas gingivalis (strain ATCC 33277 / DSM 20709 / CIP 103683 / JCM 12257 / NCTC 11834 / 2561).